We begin with the raw amino-acid sequence, 100 residues long: Large ribosomal subunit protein uL23 (100 aa).

This sequence belongs to the universal ribosomal protein uL23 family. In terms of assembly, part of the 50S ribosomal subunit. Contacts protein L29, and trigger factor when it is bound to the ribosome.

Its function is as follows. One of the early assembly proteins it binds 23S rRNA. One of the proteins that surrounds the polypeptide exit tunnel on the outside of the ribosome. Forms the main docking site for trigger factor binding to the ribosome. The sequence is that of Large ribosomal subunit protein uL23 from Prochlorococcus marinus (strain MIT 9301).